A 293-amino-acid polypeptide reads, in one-letter code: Probable xyloglucan endotransglucosylase/hydrolase protein 5 (293 aa).

The N-terminal stretch at 1 to 21 (MGRLSSTLCLTFLILATVAFG) is a signal peptide. One can recognise a GH16 domain in the interval 23-220 (PPKKSINVPF…WEKAPFVASY (198 aa)). Catalysis depends on glutamate 106, which acts as the Nucleophile. The active-site Proton donor is the glutamate 110. Glutamate 110 serves as a coordination point for xyloglucan. The N-linked (GlcNAc...) asparagine glycan is linked to asparagine 114. Residues 123–125 (QTN), 133–135 (NRE), 199–200 (DW), and glycine 204 each bind xyloglucan. 2 cysteine pairs are disulfide-bonded: cysteine 228–cysteine 237 and cysteine 274–cysteine 287. Arginine 279 is a binding site for xyloglucan.

This sequence belongs to the glycosyl hydrolase 16 family. XTH group 1 subfamily. Contains at least one intrachain disulfide bond essential for its enzymatic activity. As to expression, root specific.

It localises to the secreted. The protein resides in the cell wall. It is found in the extracellular space. Its subcellular location is the apoplast. It catalyses the reaction breaks a beta-(1-&gt;4) bond in the backbone of a xyloglucan and transfers the xyloglucanyl segment on to O-4 of the non-reducing terminal glucose residue of an acceptor, which can be a xyloglucan or an oligosaccharide of xyloglucan.. In terms of biological role, catalyzes xyloglucan endohydrolysis (XEH) and/or endotransglycosylation (XET). Cleaves and religates xyloglucan polymers, an essential constituent of the primary cell wall, and thereby participates in cell wall construction of growing tissues. In Arabidopsis thaliana (Mouse-ear cress), this protein is Probable xyloglucan endotransglucosylase/hydrolase protein 5 (XTH5).